The chain runs to 231 residues: MRIAVIGAMEEEVRILRDKLEQAETETVAGCEFTKGQLAGHEVILLKSGIGKVNAAMSTTILLERYKPEKVINTGSAGGFHHSLNVGDVVISTEVRHHDVDVTAFNYEYGQVPGMPPGFKADEALVALAEKCMQAEENIQVVKGMIATGDSFMSDPNRVAAIRDKFENLYAVEMEAAAVAQVCHQYEVPFVIIRALSDIAGKESNVSFDQFLDQAALHSTNFIVKVLEELK.

Glutamate 12 acts as the Proton acceptor in catalysis. Substrate-binding positions include glycine 78, methionine 153, and 174–175 (ME). Aspartate 198 (proton donor) is an active-site residue.

This sequence belongs to the PNP/UDP phosphorylase family. MtnN subfamily.

The catalysed reaction is S-adenosyl-L-homocysteine + H2O = S-(5-deoxy-D-ribos-5-yl)-L-homocysteine + adenine. It carries out the reaction S-methyl-5'-thioadenosine + H2O = 5-(methylsulfanyl)-D-ribose + adenine. It catalyses the reaction 5'-deoxyadenosine + H2O = 5-deoxy-D-ribose + adenine. The protein operates within amino-acid biosynthesis; L-methionine biosynthesis via salvage pathway; S-methyl-5-thio-alpha-D-ribose 1-phosphate from S-methyl-5'-thioadenosine (hydrolase route): step 1/2. Catalyzes the irreversible cleavage of the glycosidic bond in both 5'-methylthioadenosine (MTA) and S-adenosylhomocysteine (SAH/AdoHcy) to adenine and the corresponding thioribose, 5'-methylthioribose and S-ribosylhomocysteine, respectively. Also cleaves 5'-deoxyadenosine, a toxic by-product of radical S-adenosylmethionine (SAM) enzymes, into 5-deoxyribose and adenine. This chain is 5'-methylthioadenosine/S-adenosylhomocysteine nucleosidase, found in Bacillus anthracis (strain A0248).